The following is a 1832-amino-acid chain: Zinc finger protein 646 (1832 aa).

8 C2H2-type zinc fingers span residues leucine 8–histidine 31, tyrosine 48–histidine 70, phenylalanine 75–histidine 97, tyrosine 239–histidine 261, tyrosine 266–histidine 288, tyrosine 294–histidine 316, phenylalanine 374–histidine 396, and tyrosine 401–histidine 424. Residues histidine 26–proline 47 are disordered. Residues methionine 94–proline 108 show a composition bias toward basic residues. Residues methionine 94–proline 200 form a disordered region. Over residues glutamine 313–glycine 329 the composition is skewed to basic and acidic residues. The segment at glutamine 313–proline 346 is disordered. A Glycyl lysine isopeptide (Lys-Gly) (interchain with G-Cter in SUMO2) cross-link involves residue lysine 451. 2 C2H2-type zinc fingers span residues tyrosine 465–histidine 487 and tyrosine 492–histidine 514. Residues lysine 534 and lysine 557 each participate in a glycyl lysine isopeptide (Lys-Gly) (interchain with G-Cter in SUMO2) cross-link. Residues histidine 575 to histidine 597 form a C2H2-type 11 zinc finger. A Phosphoserine modification is found at serine 612. C2H2-type zinc fingers lie at residues phenylalanine 617–histidine 639 and phenylalanine 644–histidine 666. Residues lysine 660–asparagine 810 are disordered. The segment covering asparagine 661–alanine 678 has biased composition (basic residues). Residue lysine 688 forms a Glycyl lysine isopeptide (Lys-Gly) (interchain with G-Cter in SUMO2) linkage. A compositionally biased stretch (basic and acidic residues) spans glutamate 735–serine 767. Positions alanine 798–asparagine 810 are enriched in polar residues. 3 C2H2-type zinc fingers span residues histidine 821–histidine 843, tyrosine 848–histidine 870, and phenylalanine 881–histidine 904. A disordered region spans residues arginine 901–proline 931. Residues glycine 912 to valine 922 are compositionally biased toward acidic residues. The segment at histidine 958–glutamine 980 adopts a C2H2-type 17; degenerate zinc-finger fold. C2H2-type zinc fingers lie at residues phenylalanine 1052–histidine 1074 and phenylalanine 1079–histidine 1101. The tract at residues arginine 1103–glutamate 1148 is disordered. Residues lysine 1157, lysine 1168, and lysine 1178 each participate in a glycyl lysine isopeptide (Lys-Gly) (interchain with G-Cter in SUMO2) cross-link. 6 C2H2-type zinc fingers span residues phenylalanine 1203 to histidine 1225, phenylalanine 1230 to histidine 1252, phenylalanine 1258 to histidine 1280, phenylalanine 1299 to histidine 1321, tyrosine 1326 to histidine 1348, and valine 1364 to histidine 1386. Residues alanine 1274 to arginine 1294 form a disordered region. 2 disordered regions span residues glycine 1377–glutamine 1481 and threonine 1509–serine 1529. Residues serine 1378–proline 1393 are compositionally biased toward basic and acidic residues. A compositionally biased stretch (polar residues) spans serine 1406–glutamate 1417. Residues proline 1427 to glutamate 1438 show a composition bias toward basic and acidic residues. Over residues glycine 1460 to serine 1475 the composition is skewed to gly residues. C2H2-type zinc fingers lie at residues histidine 1557 to histidine 1579, phenylalanine 1585 to histidine 1607, phenylalanine 1677 to histidine 1699, tyrosine 1704 to histidine 1726, histidine 1732 to histidine 1754, and phenylalanine 1761 to histidine 1783. Residues alanine 1606–aspartate 1672 form a disordered region. The tract at residues glutamine 1781–leucine 1832 is disordered.

It belongs to the krueppel C2H2-type zinc-finger protein family.

The protein resides in the nucleus. Its function is as follows. May be involved in transcriptional regulation. The chain is Zinc finger protein 646 from Homo sapiens (Human).